A 1225-amino-acid polypeptide reads, in one-letter code: Catenin delta-2 (1225 aa).

Disordered regions lie at residues 1–51 (MFAR…TSAI), 87–117 (SETG…EDEL), 134–242 (SGIL…HLPD), and 256–312 (SSTL…KSYS). 2 stretches are compositionally biased toward polar residues: residues 20–51 (QPSS…TSAI) and 98–108 (AEEQFQWQSQD). Positions 49–84 (SAILASVKEQELQFERLTRELEAERQIVASQLERCK) form a coiled coil. Low complexity predominate over residues 149-160 (SLLSQSALQLNS). Polar residues-rich tracts occupy residues 172 to 187 (YHSN…TPSQ) and 195 to 209 (ARAT…TTSR). The residue at position 209 (R209) is an Omega-N-methylarginine. The segment covering 217 to 229 (EPAPPPPPPPREP) has biased composition (pro residues). R264 is subject to Omega-N-methylarginine. A phosphoserine mark is found at S267 and S276. R282 and R296 each carry omega-N-methylarginine. Residues 299–312 (SPKQSPSRLAKSYS) show a composition bias toward polar residues. A phosphoserine mark is found at S327, S360, S415, and S461. One copy of the ARM 1 repeat lies at 394–438 (GSRASYSSQHGHLGPELRALQSPEHHIDPIYEDRVYQKPPMRSLS). 2 disordered regions span residues 432-483 (PPMR…NAAA) and 514-542 (SPYS…QKDP). The span at 469–478 (LQRTGSQHGP) shows a compositional bias: polar residues. A Phosphoserine modification is found at S514. Phosphotyrosine is present on Y516. ARM repeat units lie at residues 540 to 579 (KDPR…HLCF), 582 to 621 (NKIK…NLVY), 626 to 666 (DDNK…NLSS), 682 to 724 (LTNA…NVSS), 728 to 773 (EARR…NLSY), 835 to 875 (PKGI…NLAA), 882 to 921 (VYIR…NMAL), and 975 to 1018 (MENA…SMWQ). Residues 1042 to 1077 (TIERDRQRPYSSSRTPSISPVRVSPNNRSASAPASP) form a disordered region. Positions 1050 to 1059 (PYSSSRTPSI) are enriched in polar residues. 2 positions are modified to phosphoserine: S1065 and S1076. Residues 1065 to 1077 (SPNNRSASAPASP) show a composition bias toward low complexity.

Belongs to the beta-catenin family. In terms of assembly, binds to E-cadherin at a juxtamembrane site within the cytoplasmic domain. Interacts with PDZD2. Interacts with ZBTB33. Binds to PSEN1. Interacts with ARHGEF28. Interacts (via the extreme C-terminus) with FRMPD2 (via the PDZ 2 domain). Interacts with CDK5. Interacts with CTNNB1. Interacts with GSK3A and GSK3B. Interacts with DNM2. Interacts with CCDC85B. O-glycosylated. Post-translationally, phosphorylated by CDK5. Phosphorylated by GSK3B. As to expression, expressed in brain; highest expression is observed in fetal brain.

Its subcellular location is the nucleus. It is found in the cell junction. It localises to the adherens junction. The protein localises to the cell projection. The protein resides in the dendrite. Its subcellular location is the perikaryon. In terms of biological role, has a critical role in neuronal development, particularly in the formation and/or maintenance of dendritic spines and synapses. Involved in the regulation of Wnt signaling. It probably acts on beta-catenin turnover, facilitating beta-catenin interaction with GSK3B, phosphorylation, ubiquitination and degradation. Functions as a transcriptional activator when bound to ZBTB33. May be involved in neuronal cell adhesion and tissue morphogenesis and integrity by regulating adhesion molecules. The sequence is that of Catenin delta-2 (CTNND2) from Homo sapiens (Human).